A 155-amino-acid chain; its full sequence is Myosin light chain alkali (155 aa).

EF-hand domains are found at residues 7–41 (REVE…LNLN) and 80–115 (GCYE…LGES).

As to quaternary structure, myosin is a hexamer of 2 heavy chains and 4 light chains.

The protein is Myosin light chain alkali (Mlc1) of Drosophila virilis (Fruit fly).